The primary structure comprises 228 residues: Orotate phosphoribosyltransferase (228 aa).

Residues R107, K108, K111, and 133–141 (EDLTTDGGS) contribute to the 5-phospho-alpha-D-ribose 1-diphosphate site. T137 serves as a coordination point for orotate.

The protein belongs to the purine/pyrimidine phosphoribosyltransferase family. PyrE subfamily. In terms of assembly, homodimer. Mg(2+) serves as cofactor.

The catalysed reaction is orotidine 5'-phosphate + diphosphate = orotate + 5-phospho-alpha-D-ribose 1-diphosphate. It participates in pyrimidine metabolism; UMP biosynthesis via de novo pathway; UMP from orotate: step 1/2. Its function is as follows. Catalyzes the transfer of a ribosyl phosphate group from 5-phosphoribose 1-diphosphate to orotate, leading to the formation of orotidine monophosphate (OMP). In Jannaschia sp. (strain CCS1), this protein is Orotate phosphoribosyltransferase.